The sequence spans 209 residues: V-type ATP synthase subunit D (209 aa).

It belongs to the V-ATPase D subunit family.

Its function is as follows. Produces ATP from ADP in the presence of a proton gradient across the membrane. The chain is V-type ATP synthase subunit D from Anaeromyxobacter dehalogenans (strain 2CP-1 / ATCC BAA-258).